A 20-amino-acid chain; its full sequence is Magnificalysin I (20 aa).

The segment at 1–10 (ALAGTIIAGA) is plays an important role in the hemolytic activity. Residues 9–20 (GASLTFKILDEV) form an N-terminal region region.

The protein belongs to the actinoporin family. Sea anemone subfamily. As to quaternary structure, octamer or nonamer in membranes. Monomer in the soluble state.

It localises to the secreted. It is found in the nematocyst. Its subcellular location is the target cell membrane. In terms of biological role, pore-forming protein that forms cations-selective hydrophilic pores of around 1 nm and causes cytolysis. Pore formation is a multi-step process that involves specific recognition of membrane sphingomyelin (but neither cholesterol nor phosphatidylcholine) using aromatic rich region and adjacent phosphocholine (POC) binding site, firm binding to the membrane (mainly driven by hydrophobic interactions) accompanied by the transfer of the N-terminal region to the lipid-water interface and finally pore formation after oligomerization of monomers. The polypeptide is Magnificalysin I (Heteractis magnifica (Magnificent sea anemone)).